The sequence spans 992 residues: P3N-PIPO polyprotein (992 aa).

The Peptidase S30 domain occupies 168-308 (TSQCRKPTYV…VENMEDIQHY (141 aa)). Catalysis depends on for P1 proteinase activity residues His221, Glu230, and Ser262. The Involved in interaction with stylet and aphid transmission signature appears at 361–364 (KLSC). The short motif at 617–619 (PTK) is the Involved in virions binding and aphid transmission element. The 123-residue stretch at 643 to 765 (MYIAKEGFCY…QSEMKFYRVG (123 aa)) folds into the Peptidase C6 domain. Residues Cys651 and His724 each act as for helper component proteinase activity in the active site.

This sequence belongs to the potyviridae P3N-PIPO polyprotein family. Interacts (via PIPO domain) with host PCaP1 protein; this interaction may help to anchor the movement complex to the plasma membrane from which the complex could move to the plasmodesmata. Post-translationally, potyviral RNA is expressed as two polyproteins which undergo post-translational proteolytic processing. Genome polyprotein is processed by NIa-pro, P1 and HC-pro proteinases resulting in the production of at least ten individual proteins. P3N-PIPO is cleaved by P1 and HC-pro proteinases resulting in the production of three individual proteins. The P1 proteinase and the HC-pro cleave only their respective C-termini autocatalytically.

The protein resides in the host cell junction. Its subcellular location is the host plasmodesma. The enzyme catalyses Hydrolyzes a Gly-|-Gly bond at its own C-terminus, commonly in the sequence -Tyr-Xaa-Val-Gly-|-Gly, in the processing of the potyviral polyprotein.. Required for aphid transmission and also has proteolytic activity. Only cleaves a Gly-Gly dipeptide at its own C-terminus. Interacts with virions and aphid stylets. Acts as a suppressor of RNA-mediated gene silencing, also known as post-transcriptional gene silencing (PTGS), a mechanism of plant viral defense that limits the accumulation of viral RNAs. May have RNA-binding activity. Its function is as follows. Allows efficient cell to cell propagation, by bypassing the host cell wall barrier. Transports viral genome to neighboring plant cells directly through plasmosdesmata, without any budding. In Soybean mosaic virus (strain G2) (SMV), this protein is P3N-PIPO polyprotein.